The primary structure comprises 447 residues: Glucose-6-phosphate isomerase (447 aa).

Catalysis depends on glutamate 288, which acts as the Proton donor. Catalysis depends on residues histidine 309 and lysine 423.

It belongs to the GPI family.

It localises to the cytoplasm. The catalysed reaction is alpha-D-glucose 6-phosphate = beta-D-fructose 6-phosphate. It participates in carbohydrate biosynthesis; gluconeogenesis. The protein operates within carbohydrate degradation; glycolysis; D-glyceraldehyde 3-phosphate and glycerone phosphate from D-glucose: step 2/4. In terms of biological role, catalyzes the reversible isomerization of glucose-6-phosphate to fructose-6-phosphate. This Lactobacillus johnsonii (strain CNCM I-12250 / La1 / NCC 533) protein is Glucose-6-phosphate isomerase.